The following is a 366-amino-acid chain: tRNA 2-selenouridine synthase (366 aa).

Residues phenylalanine 12 to histidine 135 enclose the Rhodanese domain. Cysteine 95 serves as the catalytic S-selanylcysteine intermediate.

It belongs to the SelU family. Monomer.

The catalysed reaction is 5-methylaminomethyl-2-thiouridine(34) in tRNA + selenophosphate + (2E)-geranyl diphosphate + H2O + H(+) = 5-methylaminomethyl-2-selenouridine(34) in tRNA + (2E)-thiogeraniol + phosphate + diphosphate. It catalyses the reaction 5-methylaminomethyl-2-thiouridine(34) in tRNA + (2E)-geranyl diphosphate = 5-methylaminomethyl-S-(2E)-geranyl-thiouridine(34) in tRNA + diphosphate. It carries out the reaction 5-methylaminomethyl-S-(2E)-geranyl-thiouridine(34) in tRNA + selenophosphate + H(+) = 5-methylaminomethyl-2-(Se-phospho)selenouridine(34) in tRNA + (2E)-thiogeraniol. The enzyme catalyses 5-methylaminomethyl-2-(Se-phospho)selenouridine(34) in tRNA + H2O = 5-methylaminomethyl-2-selenouridine(34) in tRNA + phosphate. Functionally, involved in the post-transcriptional modification of the uridine at the wobble position (U34) of tRNA(Lys), tRNA(Glu) and tRNA(Gln). Catalyzes the conversion of 2-thiouridine (S2U-RNA) to 2-selenouridine (Se2U-RNA). Acts in a two-step process involving geranylation of 2-thiouridine (S2U) to S-geranyl-2-thiouridine (geS2U) and subsequent selenation of the latter derivative to 2-selenouridine (Se2U) in the tRNA chain. This Pseudomonas syringae pv. tomato (strain ATCC BAA-871 / DC3000) protein is tRNA 2-selenouridine synthase.